Here is a 666-residue protein sequence, read N- to C-terminus: Fructose-1,6-bisphosphatase class 3 (666 aa).

This sequence belongs to the FBPase class 3 family. Requires Mn(2+) as cofactor.

It catalyses the reaction beta-D-fructose 1,6-bisphosphate + H2O = beta-D-fructose 6-phosphate + phosphate. The protein operates within carbohydrate biosynthesis; gluconeogenesis. The polypeptide is Fructose-1,6-bisphosphatase class 3 (Phocaeicola vulgatus (strain ATCC 8482 / DSM 1447 / JCM 5826 / CCUG 4940 / NBRC 14291 / NCTC 11154) (Bacteroides vulgatus)).